Reading from the N-terminus, the 319-residue chain is ATP-dependent 6-phosphofructokinase (319 aa).

Gly-11 contributes to the ATP binding site. 21 to 25 (RAVVR) lines the ADP pocket. Residues 72 to 73 (RC) and 102 to 105 (GNGS) contribute to the ATP site. Residue Asn-103 participates in Mg(2+) binding. 125 to 127 (TID) is a substrate binding site. Asp-127 serves as the catalytic Proton acceptor. ADP is bound at residue Arg-154. Substrate-binding positions include Arg-162 and 169–171 (MGR). ADP contacts are provided by residues 185 to 187 (GAE), Arg-211, and 213 to 215 (KMH). Substrate contacts are provided by residues Glu-222, Arg-243, and 249–252 (HIQR).

It belongs to the phosphofructokinase type A (PFKA) family. ATP-dependent PFK group I subfamily. Prokaryotic clade 'B1' sub-subfamily. Homotetramer. Requires Mg(2+) as cofactor.

It is found in the cytoplasm. It carries out the reaction beta-D-fructose 6-phosphate + ATP = beta-D-fructose 1,6-bisphosphate + ADP + H(+). It participates in carbohydrate degradation; glycolysis; D-glyceraldehyde 3-phosphate and glycerone phosphate from D-glucose: step 3/4. Allosterically activated by ADP and other diphosphonucleosides, and allosterically inhibited by phosphoenolpyruvate. Catalyzes the phosphorylation of D-fructose 6-phosphate to fructose 1,6-bisphosphate by ATP, the first committing step of glycolysis. This is ATP-dependent 6-phosphofructokinase from Clostridium acetobutylicum (strain ATCC 824 / DSM 792 / JCM 1419 / IAM 19013 / LMG 5710 / NBRC 13948 / NRRL B-527 / VKM B-1787 / 2291 / W).